The sequence spans 382 residues: GDP-mannose transporter 1 (382 aa).

Residues 1–40 (MADDKKTNEYTVEMDKLDHGNKNFEAPAPAVRPRGPPAAQ) lie on the Cytoplasmic side of the membrane. Residues 41 to 61 (LANNPILPVLAYCGSSILMTV) form a helical membrane-spanning segment. Over 62–71 (MNKYVLSGTD) the chain is Lumenal. Residues 72–92 (FNLNFFLLCVQSIVCIVAIQT) form a helical membrane-spanning segment. Topologically, residues 93 to 110 (CKSSKLITYRDFNSDEAK) are cytoplasmic. The helical transmembrane segment at 111 to 127 (KWFPITLLLIGMIYTGS) threads the bilayer. The Lumenal portion of the chain corresponds to 128 to 134 (KALQYLS). Residues 135-151 (IPVYTIFKNLTIILIAY) form a helical membrane-spanning segment. Residues 152–160 (GEVLWFGGS) lie on the Cytoplasmic side of the membrane. A helical transmembrane segment spans residues 161-182 (VTGMTLFSFGLMVLSSIIAAWA). Residues 183-200 (DIKHAVESSGDATAKVST) lie on the Lumenal side of the membrane. A helical transmembrane segment spans residues 201–221 (LNAGYIWMLINCLCTSSYVLG). Topologically, residues 222–233 (MRKRIKLTNFKD) are cytoplasmic. A helical transmembrane segment spans residues 234 to 254 (FDTMFYNNLLSIPVLLVLTFL). At 255-274 (MEDWSSANIARNFPPADRNG) the chain is on the lumenal side. The helical transmembrane segment at 275-295 (ILFAMILSGLSSVFISYTSAW) threads the bilayer. The Cytoplasmic segment spans residues 296-303 (CVRVTSST). A helical transmembrane segment spans residues 304–324 (TYSMVGALNKLPIALSGLIFF). Topologically, residues 325–327 (DAP) are lumenal. The helical transmembrane segment at 328–348 (VTFPSVSAIVVGFISGIVYAV) threads the bilayer. At 349-382 (AKIKQSAKPKTGVLPMSNPPVSASSQSMRDSLRS) the chain is on the cytoplasmic side. Positions 358–382 (KTGVLPMSNPPVSASSQSMRDSLRS) are disordered. The span at 367–382 (PPVSASSQSMRDSLRS) shows a compositional bias: polar residues.

Belongs to the TPT transporter family. SLC35D subfamily. Homooligomer.

The protein localises to the golgi apparatus membrane. It localises to the cytoplasmic vesicle membrane. The protein resides in the endoplasmic reticulum membrane. Its function is as follows. Involved in the import of GDP-mannose from the cytoplasm into the Golgi lumen. The polypeptide is GDP-mannose transporter 1 (gmt1) (Neosartorya fischeri (strain ATCC 1020 / DSM 3700 / CBS 544.65 / FGSC A1164 / JCM 1740 / NRRL 181 / WB 181) (Aspergillus fischerianus)).